The sequence spans 241 residues: MALMPLSLPFAELEVGHHLYWQIGDLYLHGQVFLSSWILIGILLAFVLVGTRGMKRDPIGLQNLLEFLWDFIRDLARDQIGEKYYRDWLPFIGTLFLFIFVSNWGGALIPWKIIELPEGELGAPTADINTTVAMALLVSLAYFYAGLSRKGLRFFELYVEPTPIMLPFKIIEEFTKPLSLSFRLFGNILADELAVGVLVYLVPLIVPLPVMLLGLFTSAIQALIFATLAAFYIGEGLHEAH.

5 helical membrane passes run 30–50 (GQVFLSSWILIGILLAFVLVG), 89–109 (LPFIGTLFLFIFVSNWGGALI), 128–148 (INTTVAMALLVSLAYFYAGLS), 193–213 (LAVGVLVYLVPLIVPLPVMLL), and 214–234 (GLFTSAIQALIFATLAAFYIG).

Belongs to the ATPase A chain family. In terms of assembly, F-type ATPases have 2 components, CF(1) - the catalytic core - and CF(0) - the membrane proton channel. CF(1) has five subunits: alpha(3), beta(3), gamma(1), delta(1), epsilon(1). CF(0) has four main subunits: a, b, b' and c.

The protein resides in the cellular thylakoid membrane. Key component of the proton channel; it plays a direct role in the translocation of protons across the membrane. This Synechococcus sp. (strain CC9902) protein is ATP synthase subunit a.